The primary structure comprises 102 residues: CRISPR-associated endoribonuclease Cas2 1 (102 aa).

Asp-17 serves as a coordination point for Mg(2+).

Belongs to the CRISPR-associated endoribonuclease Cas2 protein family. As to quaternary structure, homodimer, forms a heterotetramer with a Cas1 homodimer. Requires Mg(2+) as cofactor.

CRISPR (clustered regularly interspaced short palindromic repeat), is an adaptive immune system that provides protection against mobile genetic elements (viruses, transposable elements and conjugative plasmids). CRISPR clusters contain sequences complementary to antecedent mobile elements and target invading nucleic acids. CRISPR clusters are transcribed and processed into CRISPR RNA (crRNA). Functions as a ssRNA-specific endoribonuclease. Involved in the integration of spacer DNA into the CRISPR cassette. This is CRISPR-associated endoribonuclease Cas2 1 from Rhodospirillum rubrum (strain ATCC 11170 / ATH 1.1.1 / DSM 467 / LMG 4362 / NCIMB 8255 / S1).